We begin with the raw amino-acid sequence, 167 residues long: Putative pre-16S rRNA nuclease (167 aa).

The interval 1–24 (MVLTQHRVPDRPGDPDQDPGRGRR) is disordered. Basic and acidic residues predominate over residues 7-21 (RVPDRPGDPDQDPGR).

The protein belongs to the YqgF nuclease family.

It localises to the cytoplasm. Could be a nuclease involved in processing of the 5'-end of pre-16S rRNA. The sequence is that of Putative pre-16S rRNA nuclease from Mycolicibacterium paratuberculosis (strain ATCC BAA-968 / K-10) (Mycobacterium paratuberculosis).